The sequence spans 304 residues: Ribosomal RNA small subunit methyltransferase H (304 aa).

S-adenosyl-L-methionine is bound by residues 36-38, D53, F79, D98, and Q105; that span reads GGH.

The protein belongs to the methyltransferase superfamily. RsmH family.

It is found in the cytoplasm. It carries out the reaction cytidine(1402) in 16S rRNA + S-adenosyl-L-methionine = N(4)-methylcytidine(1402) in 16S rRNA + S-adenosyl-L-homocysteine + H(+). Specifically methylates the N4 position of cytidine in position 1402 (C1402) of 16S rRNA. This Myxococcus xanthus (strain DK1622) protein is Ribosomal RNA small subunit methyltransferase H.